The sequence spans 271 residues: 3-methyl-2-oxobutanoate hydroxymethyltransferase (271 aa).

Asp-52 and Asp-91 together coordinate Mg(2+). Residues 52–53 (DS), Asp-91, and Lys-121 contribute to the 3-methyl-2-oxobutanoate site. Mg(2+) is bound at residue Glu-123. Glu-189 acts as the Proton acceptor in catalysis.

Belongs to the PanB family. As to quaternary structure, homodecamer; pentamer of dimers. Mg(2+) is required as a cofactor.

The protein resides in the cytoplasm. It catalyses the reaction 3-methyl-2-oxobutanoate + (6R)-5,10-methylene-5,6,7,8-tetrahydrofolate + H2O = 2-dehydropantoate + (6S)-5,6,7,8-tetrahydrofolate. It functions in the pathway cofactor biosynthesis; (R)-pantothenate biosynthesis; (R)-pantoate from 3-methyl-2-oxobutanoate: step 1/2. Its function is as follows. Catalyzes the reversible reaction in which hydroxymethyl group from 5,10-methylenetetrahydrofolate is transferred onto alpha-ketoisovalerate to form ketopantoate. The sequence is that of 3-methyl-2-oxobutanoate hydroxymethyltransferase from Acidothermus cellulolyticus (strain ATCC 43068 / DSM 8971 / 11B).